A 193-amino-acid polypeptide reads, in one-letter code: uncharacterized protein (193 aa).

4 helical membrane passes run 8–28 (GVLV…VVAI), 46–66 (FFIA…VASA), 82–102 (GLSI…ALVV), and 141–161 (IALT…LLAA).

This sequence to M.leprae ML1222.

The protein resides in the cell membrane. This is an uncharacterized protein from Mycobacterium tuberculosis (strain CDC 1551 / Oshkosh).